We begin with the raw amino-acid sequence, 434 residues long: Serine hydroxymethyltransferase (434 aa).

Residue 120–122 (GHI) participates in (6S)-5,6,7,8-tetrahydrofolate binding. The residue at position 236 (Lys236) is an N6-(pyridoxal phosphate)lysine. Glu255 is a (6S)-5,6,7,8-tetrahydrofolate binding site.

This sequence belongs to the SHMT family. Homodimer. The cofactor is pyridoxal 5'-phosphate.

The protein localises to the cytoplasm. The protein operates within amino-acid biosynthesis; glycine biosynthesis; glycine from L-serine: step 1/1. Its function is as follows. Catalyzes the reversible interconversion of serine and glycine with a modified folate serving as the one-carbon carrier. Also exhibits a pteridine-independent aldolase activity toward beta-hydroxyamino acids, producing glycine and aldehydes, via a retro-aldol mechanism. This Korarchaeum cryptofilum (strain OPF8) protein is Serine hydroxymethyltransferase.